A 640-amino-acid chain; its full sequence is MPTITLPDGSQRSFDHAVSVADVALSIGAGLAKATVAGKVDGKLVDACDLIENDASLQIITPKDAEGLEIIRHSCAHLVGHAVKQLYPTAKMVIGPVIDDGFYYDIAYERPFTPDDLAAIEQRMQQLIEKDYDVIKKVTPRAEVIEVFTARHEDYKLRLVEGMPDEQAMGLYYHEEYVDMCRGPHVPNTRFLKSFKLTKLSGAYWRGDAKNEQLQRVYGTAWADKKQLAAYIQRIEEAEKRDHRKIGKRLGLFHTQEEAPGMVFWHPQGWTLYQVLEQYMRKVQRENGYLEIKTPQVVDRSLWEKSGHWANYADNMFTTQSESRDYAIKPMNCPCHVQVFNQGLKSYRELPLRLAEFGACHRNEPSGALHGIMRVRGFTQDDAHIFCTEDQMQAESAAFIKLTLDVYADFGFKDIELKLSTRPEKRVGSDELWDRAESALASALDSAGLPYDLQPGEGAFYGPKIEFSLKDCLGRVWQCGTLQLDFNLPIRLSAEYVSEDNSRKNPVMLHRAILGSFERFIGILIEHYEGAFPAWLAPTQAVIMNITDKQADFALEVEKTLAESGFRAKSDLRNEKIGFKIREHTLLKVPYLLVIGDREVEMQTVAVRTREGADLGSMPVAQFAEFLAQAVSRRGRQDTE.

The TGS domain occupies 1–61; the sequence is MPTITLPDGS…ENDASLQIIT (61 aa). The catalytic stretch occupies residues 242-533; sequence DHRKIGKRLG…LIEHYEGAFP (292 aa). Residues C333, H384, and H510 each coordinate Zn(2+).

The protein belongs to the class-II aminoacyl-tRNA synthetase family. Homodimer. Zn(2+) serves as cofactor.

The protein localises to the cytoplasm. The enzyme catalyses tRNA(Thr) + L-threonine + ATP = L-threonyl-tRNA(Thr) + AMP + diphosphate + H(+). Functionally, catalyzes the attachment of threonine to tRNA(Thr) in a two-step reaction: L-threonine is first activated by ATP to form Thr-AMP and then transferred to the acceptor end of tRNA(Thr). Also edits incorrectly charged L-seryl-tRNA(Thr). The sequence is that of Threonine--tRNA ligase from Pseudomonas syringae pv. tomato (strain ATCC BAA-871 / DC3000).